The primary structure comprises 764 residues: Putative wall-associated receptor kinase-like 13 (764 aa).

Positions 1–26 (MRGNKNYYFLSLLYFLSLPILHFSSC) are cleaved as a signal peptide. Over 27 to 379 (THKCGDIQIP…HRCIDYHIPE (353 aa)) the chain is Extracellular. Asparagine 78, asparagine 114, asparagine 121, asparagine 164, asparagine 233, asparagine 238, asparagine 259, and asparagine 283 each carry an N-linked (GlcNAc...) asparagine glycan. The interval 308–372 (CTCDNHIASG…CINTSGGHRC (65 aa)) is atypical EGF-like. Intrachain disulfides connect cysteine 310–cysteine 323, cysteine 345–cysteine 363, and cysteine 352–cysteine 372. N-linked (GlcNAc...) asparagine glycosylation is present at asparagine 365. The chain crosses the membrane as a helical span at residues 380 to 400 (VMLGLGAGFFVLIVGGGIWWW). Residues 401-764 (RKLLRKRRMT…SGSTEIARSM (364 aa)) lie on the Cytoplasmic side of the membrane. Positions 454–728 (FNDNRVIGQG…REVSTALERI (275 aa)) constitute a Protein kinase domain. Residues 460–468 (IGQGGQGTV) and lysine 482 contribute to the ATP site. A Phosphotyrosine modification is found at tyrosine 527. Aspartate 579 (proton acceptor) is an active-site residue. Residues threonine 613 and threonine 618 each carry the phosphothreonine modification. Residue tyrosine 626 is modified to Phosphotyrosine.

It belongs to the protein kinase superfamily. Ser/Thr protein kinase family.

The protein localises to the membrane. It catalyses the reaction L-seryl-[protein] + ATP = O-phospho-L-seryl-[protein] + ADP + H(+). The catalysed reaction is L-threonyl-[protein] + ATP = O-phospho-L-threonyl-[protein] + ADP + H(+). Putative serine/threonine-protein kinase that may function as a signaling receptor of extracellular matrix component. In Arabidopsis thaliana (Mouse-ear cress), this protein is Putative wall-associated receptor kinase-like 13 (WAKL13).